The sequence spans 327 residues: Ribosomal RNA small subunit methyltransferase H (327 aa).

Residues glycine 42 to histidine 44, aspartate 61, leucine 95, aspartate 109, and glutamine 116 contribute to the S-adenosyl-L-methionine site.

It belongs to the methyltransferase superfamily. RsmH family.

It localises to the cytoplasm. It catalyses the reaction cytidine(1402) in 16S rRNA + S-adenosyl-L-methionine = N(4)-methylcytidine(1402) in 16S rRNA + S-adenosyl-L-homocysteine + H(+). Functionally, specifically methylates the N4 position of cytidine in position 1402 (C1402) of 16S rRNA. The sequence is that of Ribosomal RNA small subunit methyltransferase H from Desulfovibrio desulfuricans (strain ATCC 27774 / DSM 6949 / MB).